The sequence spans 254 residues: Decaprenylphosphoryl-2-keto-beta-D-erythro-pentose reductase (254 aa).

Asp67 serves as a coordination point for NAD(+). The Proton acceptor role is filled by Tyr160. Residue Lys164 participates in NAD(+) binding.

The protein belongs to the short-chain dehydrogenases/reductases (SDR) family. In terms of assembly, interacts with DprE1 to form an epimerase complex.

The protein localises to the periplasm. The enzyme catalyses trans,octa-cis-decaprenylphospho-beta-D-arabinofuranose + NAD(+) = trans,octa-cis-decaprenylphospho-beta-D-erythro-pentofuranosid-2-ulose + NADH + H(+). It functions in the pathway cell wall biogenesis; cell wall polysaccharide biosynthesis. Component of the DprE1-DprE2 complex that catalyzes the 2-step epimerization of decaprenyl-phospho-ribose (DPR) to decaprenyl-phospho-arabinose (DPA), a key precursor that serves as the arabinose donor required for the synthesis of cell-wall arabinans. DprE1 catalyzes the first step of epimerization, namely FAD-dependent oxidation of the C2' hydroxyl of DPR to yield the keto intermediate decaprenyl-phospho-2'-keto-D-arabinose (DPX). The intermediate DPX is then transferred to DprE2 subunit of the epimerase complex, most probably through a 'substrate channel' at the interface of DprE1-DprE2 complex. DprE2 then catalyzes the second step of epimerization, the NAD(+)-dependent reduction of DPX that leads to the formation of DPA. This is Decaprenylphosphoryl-2-keto-beta-D-erythro-pentose reductase from Mycolicibacterium smegmatis (strain ATCC 700084 / mc(2)155) (Mycobacterium smegmatis).